The primary structure comprises 218 residues: MICIPIIDNTVEKALISAKEALKYGDIVEFRLDLLDNLTKFDIEKFAKIPSIITIRANWEGGAWKESNNKRIEFLKHAIKHGAKFIDVELKEEKNLELVTYRNEIGSKTKIIVSYHDFEKTPEINELIDVVEKELKIGDIAKFATFSNSKKDVLKILEVMNKYPGDIIAIGMGESGKLTRILGLRFGSILTFASMKGKSSAPGQIDVTKLKEILNLIE.

Residues 29 to 31 (EFR) and Arg56 contribute to the 3-dehydroquinate site. The active-site Proton donor/acceptor is the His116. Lys142 serves as the catalytic Schiff-base intermediate with substrate. Residues Arg180, Ser200, and Gln204 each contribute to the 3-dehydroquinate site.

It belongs to the type-I 3-dehydroquinase family. Homodimer.

It carries out the reaction 3-dehydroquinate = 3-dehydroshikimate + H2O. Its pathway is metabolic intermediate biosynthesis; chorismate biosynthesis; chorismate from D-erythrose 4-phosphate and phosphoenolpyruvate: step 3/7. Its function is as follows. Involved in the third step of the chorismate pathway, which leads to the biosynthesis of aromatic amino acids. Catalyzes the cis-dehydration of 3-dehydroquinate (DHQ) and introduces the first double bond of the aromatic ring to yield 3-dehydroshikimate. The sequence is that of 3-dehydroquinate dehydratase from Methanococcus vannielii (strain ATCC 35089 / DSM 1224 / JCM 13029 / OCM 148 / SB).